The chain runs to 350 residues: Cytochrome c biogenesis protein CcsA (350 aa).

The next 8 membrane-spanning stretches (helical) occupy residues 23 to 43 (NVAF…AAFP), 47 to 67 (LLAE…AALL), 82 to 102 (LYES…LALH), 108 to 128 (WVGV…ALVL), 153 to 173 (VMLL…SFLI), 258 to 278 (LIGL…VWAN), 293 to 313 (WALI…TKGW), and 319 to 339 (ALLA…VNFL).

This sequence belongs to the CcmF/CycK/Ccl1/NrfE/CcsA family. May interact with ccs1.

It is found in the cellular thylakoid membrane. Functionally, required during biogenesis of c-type cytochromes (cytochrome c6 and cytochrome f) at the step of heme attachment. The chain is Cytochrome c biogenesis protein CcsA from Synechococcus sp. (strain JA-2-3B'a(2-13)) (Cyanobacteria bacterium Yellowstone B-Prime).